Here is a 525-residue protein sequence, read N- to C-terminus: Phosphoenolpyruvate carboxykinase (ATP) (525 aa).

Residues Arg52, Tyr186, and Lys192 each contribute to the substrate site. Residues Lys192, His211, and 228–236 each bind ATP; that span reads GLSGTGKTT. Mn(2+) is bound by residues Lys192 and His211. Asp249 serves as a coordination point for Mn(2+). ATP contacts are provided by residues Glu277, Arg314, 433–434, and Thr439; that span reads RI. Residue Arg314 coordinates substrate.

The protein belongs to the phosphoenolpyruvate carboxykinase (ATP) family. The cofactor is Mn(2+).

It is found in the cytoplasm. It carries out the reaction oxaloacetate + ATP = phosphoenolpyruvate + ADP + CO2. The protein operates within carbohydrate biosynthesis; gluconeogenesis. Functionally, involved in the gluconeogenesis. Catalyzes the conversion of oxaloacetate (OAA) to phosphoenolpyruvate (PEP) through direct phosphoryl transfer between the nucleoside triphosphate and OAA. This chain is Phosphoenolpyruvate carboxykinase (ATP), found in Fusobacterium nucleatum subsp. nucleatum (strain ATCC 25586 / DSM 15643 / BCRC 10681 / CIP 101130 / JCM 8532 / KCTC 2640 / LMG 13131 / VPI 4355).